Consider the following 483-residue polypeptide: Probable cytosol aminopeptidase (483 aa).

Residues lysine 252 and aspartate 257 each coordinate Mn(2+). Lysine 264 is an active-site residue. Aspartate 275, aspartate 334, and glutamate 336 together coordinate Mn(2+). Arginine 338 is an active-site residue.

This sequence belongs to the peptidase M17 family. It depends on Mn(2+) as a cofactor.

The protein localises to the cytoplasm. It catalyses the reaction Release of an N-terminal amino acid, Xaa-|-Yaa-, in which Xaa is preferably Leu, but may be other amino acids including Pro although not Arg or Lys, and Yaa may be Pro. Amino acid amides and methyl esters are also readily hydrolyzed, but rates on arylamides are exceedingly low.. The catalysed reaction is Release of an N-terminal amino acid, preferentially leucine, but not glutamic or aspartic acids.. Presumably involved in the processing and regular turnover of intracellular proteins. Catalyzes the removal of unsubstituted N-terminal amino acids from various peptides. The polypeptide is Probable cytosol aminopeptidase (Legionella pneumophila (strain Corby)).